We begin with the raw amino-acid sequence, 395 residues long: Putative 8-amino-7-oxononanoate synthase (395 aa).

Arginine 23 is a substrate binding site. A pyridoxal 5'-phosphate-binding site is contributed by 110 to 111; it reads GY. Histidine 135 contributes to the substrate binding site. Pyridoxal 5'-phosphate contacts are provided by residues serine 182, 207–210, and 239–242; these read DEAH and TFSK. At lysine 242 the chain carries N6-(pyridoxal phosphate)lysine. Threonine 356 contributes to the substrate binding site.

The protein belongs to the class-II pyridoxal-phosphate-dependent aminotransferase family. BioF subfamily. As to quaternary structure, homodimer. Requires pyridoxal 5'-phosphate as cofactor.

It carries out the reaction 6-carboxyhexanoyl-[ACP] + L-alanine + H(+) = (8S)-8-amino-7-oxononanoate + holo-[ACP] + CO2. It participates in cofactor biosynthesis; biotin biosynthesis. Its function is as follows. Catalyzes the decarboxylative condensation of pimeloyl-[acyl-carrier protein] and L-alanine to produce 8-amino-7-oxononanoate (AON), [acyl-carrier protein], and carbon dioxide. The sequence is that of Putative 8-amino-7-oxononanoate synthase (bioF) from Bacillus mycoides (strain KBAB4) (Bacillus weihenstephanensis).